The primary structure comprises 455 residues: Venom prothrombin activator trocarin-D (455 aa).

The signal sequence occupies residues 1–20 (MAPQLLLCLILTFLWSLPEA). Residues 21–40 (ESNVFLKSKVANRFLQRTKR) constitute a propeptide that is removed on maturation. Positions 41 to 86 (SNSLFEEIRPGNIERECIEEKCSKEEAREVFEDNEKTETFWNVYVD) constitute a Gla domain. 4-carboxyglutamate occurs at positions 46, 47, 54, 56, 59, 60, 65, 66, 69, 72, and 75. A disulfide bridge connects residues Cys57 and Cys62. Residues 86-122 (DGDQCSSNPCHYRGTCKDGIGSYTCTCLPNYEGKNCE) enclose the EGF-like 1; calcium-binding domain. 11 disulfides stabilise this stretch: Cys90/Cys101, Cys95/Cys110, Cys112/Cys121, Cys129/Cys140, Cys136/Cys149, Cys151/Cys164, Cys172/Cys328, Cys216/Cys221, Cys236/Cys252, Cys376/Cys390, and Cys401/Cys429. O-linked (Hex...) serine glycosylation occurs at Ser92. One can recognise an EGF-like 2 domain in the interval 129 to 164 (CRVDNGNCWHFCKRVQSETQCSCAESYRLGVDGHSC). Residues 182–209 (REASLPDFVQSQKATLLKKSDNPSPDIR) constitute a propeptide, activation peptide. One can recognise a Peptidase S1 domain in the interval 210 to 453 (IVNGMDCKLG…FIPWIKKIMS (244 aa)). Catalysis depends on His251, which acts as the Charge relay system. Residue Asn254 is glycosylated (N-linked (GlcNAc...) asparagine). Asp308 (charge relay system) is an active-site residue. Ser405 (charge relay system) is an active-site residue.

The protein belongs to the peptidase S1 family. Snake venom subfamily. As to quaternary structure, heterodimer of a light chain and a heavy chain; disulfide-linked. In terms of processing, gamma-carboxyglutamate residues are formed by vitamin K dependent carboxylation. These residues are essential for the binding of calcium. The O-linked saccharides at Ser-92 are a mixture of Xyl-Glc, and Glc along with smaller amounts of Xyl-GlcNAc, GlcNAc, Gal, GalNAc, Xyl-Gal, and Xyl-GalNAc, suggesting that the glycosyl transferases responsible for this modification are non-specific. The N-linked carbohydrate at Asn-254 (Asn-45 of the heavy chain) is a sialylated and diantennary oligosaccharide. Expressed by the venom gland.

It localises to the secreted. The enzyme catalyses Selective cleavage of Arg-|-Thr and then Arg-|-Ile bonds in prothrombin to form thrombin.. Activated by calcium and phospholipids. Functionally, snake prothrombin activator that attacks the hemostatic system of prey. This protein is functionally similar to blood coagulation factor Xa. Induces cyanosis and death in mice at 1 mg/kg body weight during blood clotting. In Tropidechis carinatus (Australian rough-scaled snake), this protein is Venom prothrombin activator trocarin-D.